Here is a 247-residue protein sequence, read N- to C-terminus: UDP-2,3-diacylglucosamine hydrolase (247 aa).

Mn(2+) contacts are provided by Asp8, His10, Asp41, Asn79, and His114. Position 79–80 (79–80 (NR)) interacts with substrate. Substrate is bound by residues Asp122, Ser160, Asp171, Gln174, and His202. Mn(2+)-binding residues include His202 and His204.

It belongs to the LpxH family. Mn(2+) is required as a cofactor.

It is found in the cell inner membrane. It carries out the reaction UDP-2-N,3-O-bis[(3R)-3-hydroxytetradecanoyl]-alpha-D-glucosamine + H2O = 2-N,3-O-bis[(3R)-3-hydroxytetradecanoyl]-alpha-D-glucosaminyl 1-phosphate + UMP + 2 H(+). The protein operates within glycolipid biosynthesis; lipid IV(A) biosynthesis; lipid IV(A) from (3R)-3-hydroxytetradecanoyl-[acyl-carrier-protein] and UDP-N-acetyl-alpha-D-glucosamine: step 4/6. In terms of biological role, hydrolyzes the pyrophosphate bond of UDP-2,3-diacylglucosamine to yield 2,3-diacylglucosamine 1-phosphate (lipid X) and UMP by catalyzing the attack of water at the alpha-P atom. Involved in the biosynthesis of lipid A, a phosphorylated glycolipid that anchors the lipopolysaccharide to the outer membrane of the cell. This is UDP-2,3-diacylglucosamine hydrolase from Xanthomonas campestris pv. campestris (strain 8004).